A 276-amino-acid polypeptide reads, in one-letter code: NAD-capped RNA hydrolase NudC (276 aa).

Position 82 (Arg82) interacts with substrate. Positions 112 and 115 each coordinate Zn(2+). Residue Glu125 participates in substrate binding. The Zn(2+) site is built by Cys130 and Cys133. Tyr138 is a binding site for substrate. In terms of domain architecture, Nudix hydrolase spans 139–262 (PRISPSMIVL…SIARYLIDLY (124 aa)). The a divalent metal cation site is built by Ala172, Glu188, and Glu192. Residues 173–194 (GFAEPGESAEDCLIREVREEVS) carry the Nudix box motif. 206–213 (QCWPFPHS) serves as a coordination point for substrate. Residue Glu233 participates in a divalent metal cation binding. Ala255 provides a ligand contact to substrate.

The protein belongs to the Nudix hydrolase family. NudC subfamily. As to quaternary structure, homodimer. It depends on Mg(2+) as a cofactor. The cofactor is Mn(2+). Requires Zn(2+) as cofactor.

It catalyses the reaction a 5'-end NAD(+)-phospho-ribonucleoside in mRNA + H2O = a 5'-end phospho-adenosine-phospho-ribonucleoside in mRNA + beta-nicotinamide D-ribonucleotide + 2 H(+). The catalysed reaction is NAD(+) + H2O = beta-nicotinamide D-ribonucleotide + AMP + 2 H(+). The enzyme catalyses NADH + H2O = reduced beta-nicotinamide D-ribonucleotide + AMP + 2 H(+). In terms of biological role, mRNA decapping enzyme that specifically removes the nicotinamide adenine dinucleotide (NAD) cap from a subset of mRNAs by hydrolyzing the diphosphate linkage to produce nicotinamide mononucleotide (NMN) and 5' monophosphate mRNA. The NAD-cap is present at the 5'-end of some mRNAs and stabilizes RNA against 5'-processing. Has preference for mRNAs with a 5'-end purine. Catalyzes the hydrolysis of a broad range of dinucleotide pyrophosphates. The chain is NAD-capped RNA hydrolase NudC from Pseudomonas fluorescens (strain ATCC BAA-477 / NRRL B-23932 / Pf-5).